The sequence spans 414 residues: Probable indole-3-pyruvate monooxygenase YUCCA1 (414 aa).

25-30 (GAGPSG) contacts FAD. 189–194 (GCGNSG) provides a ligand contact to NADP(+).

It belongs to the FMO family. FAD serves as cofactor. In terms of tissue distribution, expressed in the apical meristems and young floral primordia. Detected in the floral meristems and at the base of the floral organs.

The catalysed reaction is indole-3-pyruvate + NADPH + O2 + H(+) = (indol-3-yl)acetate + CO2 + NADP(+) + H2O. The protein operates within plant hormone metabolism; auxin biosynthesis. Functionally, involved in auxin biosynthesis, but not in the tryptamine or the CYP79B2/B3 branches. Catalyzes in vitro the N-oxidation of tryptamine to form N-hydroxyl tryptamine. Involved during embryogenesis and seedling development. Required for the formation of floral organs and vascular tissues. Belongs to the set of redundant YUCCA genes probably responsible for auxin biosynthesis in shoots. The polypeptide is Probable indole-3-pyruvate monooxygenase YUCCA1 (YUC1) (Arabidopsis thaliana (Mouse-ear cress)).